Reading from the N-terminus, the 338-residue chain is Lipoate-protein ligase A (338 aa).

The BPL/LPL catalytic domain occupies 29–216 (PATQRVLFLW…AFFAYYGERV (188 aa)). ATP-binding positions include arginine 71, 76–79 (GAVF), and lysine 134. Lysine 134 lines the (R)-lipoate pocket.

The protein belongs to the LplA family. Monomer.

Its subcellular location is the cytoplasm. The enzyme catalyses L-lysyl-[lipoyl-carrier protein] + (R)-lipoate + ATP = N(6)-[(R)-lipoyl]-L-lysyl-[lipoyl-carrier protein] + AMP + diphosphate + H(+). Its pathway is protein modification; protein lipoylation via exogenous pathway; protein N(6)-(lipoyl)lysine from lipoate: step 1/2. It participates in protein modification; protein lipoylation via exogenous pathway; protein N(6)-(lipoyl)lysine from lipoate: step 2/2. Catalyzes both the ATP-dependent activation of exogenously supplied lipoate to lipoyl-AMP and the transfer of the activated lipoyl onto the lipoyl domains of lipoate-dependent enzymes. This Cronobacter sakazakii (strain ATCC BAA-894) (Enterobacter sakazakii) protein is Lipoate-protein ligase A.